The following is a 483-amino-acid chain: Probable glycosyltransferase 6 (483 aa).

Topologically, residues 1–40 are cytoplasmic; that stretch reads MAASETAPFGVSAASKGGGGVAGARAQHGQLAVAGRVHDA. A helical; Signal-anchor for type II membrane protein transmembrane segment spans residues 41–61; the sequence is LVFAAGAVAAVLVLLATASFL. At 62–483 the chain is on the lumenal side; sequence SPMPVTNLVA…PLPFDYPAAR (422 aa). An N-linked (GlcNAc...) asparagine glycan is attached at Asn144.

This sequence belongs to the glycosyltransferase 34 family.

The protein resides in the golgi apparatus membrane. In terms of biological role, probable glycosyltransferase that may be involved in the biosynthesis of xyloglucan. The chain is Probable glycosyltransferase 6 from Oryza sativa subsp. indica (Rice).